A 125-amino-acid chain; its full sequence is Protein ApaG (125 aa).

The ApaG domain maps to 1-125 (MIEQPRICVQ…FRLAIPALIH (125 aa)).

The protein is Protein ApaG of Yersinia pseudotuberculosis serotype IB (strain PB1/+).